The primary structure comprises 98 residues: Lipolysis-activating peptide 1-beta chain (98 aa).

The first 22 residues, 1–22, serve as a signal peptide directing secretion; sequence MANVQVIFVAYIAVIAFSMVYG. In terms of domain architecture, LCN-type CS-alpha/beta spans 23–91; it reads DDYKPFGEHN…FLKAMEKQCP (69 aa). 3 disulfides stabilise this stretch: cysteine 37/cysteine 60, cysteine 45/cysteine 70, and cysteine 49/cysteine 72.

Belongs to the long (3 C-C) scorpion toxin superfamily. In terms of assembly, homodimer; disulfide-linked or monomer (edited version) or heterodimer of an alpha chain (AC B8XH01) and this beta chain (non-edited version). Expressed by the venom gland.

The protein localises to the secreted. In terms of biological role, the homodimer inhibits HMG-CoA reductase (HMGCR) (32% of inhibition produced by 0.6 uM), a glycoprotein involved in the control of cholesterol biosynthesis. The inhibitory effects of bumarsin are seen at much lower concentrations (0.6 uM) than that for statins such as atorvastatin (5 mM) and simvastatin (10 uM). In addition to inhibition of HMG-CoA reductase, this protein lowers cholesterol levels by inducing steroid hormone synthesis via StAR, and by increasing reverse cholesterol transport mediated by the induction of ABCA1 and APOA1. The heterodimer non-edited LVP1 induces lipolysis in rat adipocytes. Induction of lipolysis by LVP1 appears to be mediated through the beta-2 adrenergic receptor pathway (ADRB2). Functionally, the monomer edited version, similar to alpha-toxins, may modulate voltage-gated sodium channels (Nav) and may block voltage-gated potassium channels (Kv). The sequence is that of Lipolysis-activating peptide 1-beta chain from Buthus israelis (Israeli scorpion).